A 162-amino-acid polypeptide reads, in one-letter code: tRNA-specific adenosine deaminase (162 aa).

Residues 3–115 (DSDKYFMKCA…KNLQKYICCK (113 aa)) enclose the CMP/dCMP-type deaminase domain. Residue His-54 participates in Zn(2+) binding. The active-site Proton donor is the Glu-56. Zn(2+)-binding residues include Cys-84 and Cys-87.

The protein belongs to the cytidine and deoxycytidylate deaminase family. As to quaternary structure, homodimer. The cofactor is Zn(2+).

The enzyme catalyses adenosine(34) in tRNA + H2O + H(+) = inosine(34) in tRNA + NH4(+). Functionally, catalyzes the deamination of adenosine to inosine at the wobble position 34 of tRNA(Arg2). This chain is tRNA-specific adenosine deaminase, found in Buchnera aphidicola subsp. Baizongia pistaciae (strain Bp).